The chain runs to 182 residues: MASSMISSATIATVNCSSPAQANMVAPFTGLKSASAFPVTRKANNDITSLASNGGRVQCMQVWPPLGKKKFETLSYLPDLTPVQLAKEVDYLLRSKWIPCLEFELEEGFVHRKYSSLPTYYDGRYWTMWKLPMFGCTDSAQVLEELENCKKEYPNAFIRIIGFDNVRQVQCISFIAYKPKGY.

Residues 1-58 constitute a chloroplast transit peptide; sequence MASSMISSATIATVNCSSPAQANMVAPFTGLKSASAFPVTRKANNDITSLASNGGRVQ.

It belongs to the RuBisCO small chain family. As to quaternary structure, heterohexadecamer of 8 large and 8 small subunits.

It localises to the plastid. It is found in the chloroplast. Its function is as follows. RuBisCO catalyzes two reactions: the carboxylation of D-ribulose 1,5-bisphosphate, the primary event in carbon dioxide fixation, as well as the oxidative fragmentation of the pentose substrate. Both reactions occur simultaneously and in competition at the same active site. Although the small subunit is not catalytic it is essential for maximal activity. The chain is Ribulose bisphosphate carboxylase small subunit, chloroplastic from Gossypium hirsutum (Upland cotton).